Here is a 336-residue protein sequence, read N- to C-terminus: D-alanine--D-alanine ligase (336 aa).

The ATP-grasp domain maps to 124 to 330 (KMWFSALGIP…FATFLEQAIL (207 aa)). Position 154–209 (154–209 (AFDEWGSVFIKAASQGSSVGCFPAHRREDIPGLVRKAFEYAPFVVVEKTIKARELE)) interacts with ATP. Mg(2+) is bound by residues Asp-284, Glu-297, and Asn-299.

It belongs to the D-alanine--D-alanine ligase family. The cofactor is Mg(2+). Mn(2+) serves as cofactor.

It is found in the cytoplasm. The enzyme catalyses 2 D-alanine + ATP = D-alanyl-D-alanine + ADP + phosphate + H(+). The protein operates within cell wall biogenesis; peptidoglycan biosynthesis. Its function is as follows. Cell wall formation. The sequence is that of D-alanine--D-alanine ligase from Shewanella amazonensis (strain ATCC BAA-1098 / SB2B).